Consider the following 286-residue polypeptide: MKITVPATSANIGPGFDSVGVAVSKYLTIEVLEPADVWFIEHDLGDIPSDENNLLISTALQVKSDLQPHKLVMASDIPLARGLGSSSSVIVAGIELANQLADLKLSDDDKLDIATKIEGHPDNVAPAIFGNLVVASYVDEHVNSIVTEFPECAFVAFIPSYELKTSESRGVLPSDLSYKDAVAASSIANVAIAALFAGDLVKAGRAIQGDMFHERYRQKLVKEFVTIKELSGQYGAYATYLSGAGPTVMTLTPNDQAEALKTAIDGIGLDGETLILSVDKGGVVVD.

ATP is bound at residue 78-88; the sequence is PLARGLGSSSS.

Belongs to the GHMP kinase family. Homoserine kinase subfamily.

The protein resides in the cytoplasm. The enzyme catalyses L-homoserine + ATP = O-phospho-L-homoserine + ADP + H(+). Its pathway is amino-acid biosynthesis; L-threonine biosynthesis; L-threonine from L-aspartate: step 4/5. Catalyzes the ATP-dependent phosphorylation of L-homoserine to L-homoserine phosphate. The protein is Homoserine kinase of Streptococcus thermophilus (strain CNRZ 1066).